Here is an 899-residue protein sequence, read N- to C-terminus: Protein translocase subunit SecA (899 aa).

ATP is bound by residues Gln87, 105 to 109 (GEGKT), and Asp516. Residues Cys884, Cys886, Cys895, and His896 each contribute to the Zn(2+) site.

The protein belongs to the SecA family. In terms of assembly, monomer and homodimer. Part of the essential Sec protein translocation apparatus which comprises SecA, SecYEG and auxiliary proteins SecDF. Other proteins may also be involved. It depends on Zn(2+) as a cofactor.

The protein localises to the cell inner membrane. It is found in the cytoplasm. It catalyses the reaction ATP + H2O + cellular proteinSide 1 = ADP + phosphate + cellular proteinSide 2.. Part of the Sec protein translocase complex. Interacts with the SecYEG preprotein conducting channel. Has a central role in coupling the hydrolysis of ATP to the transfer of proteins into and across the cell membrane, serving as an ATP-driven molecular motor driving the stepwise translocation of polypeptide chains across the membrane. The sequence is that of Protein translocase subunit SecA from Borreliella afzelii (strain PKo) (Borrelia afzelii).